The sequence spans 615 residues: Leucine aminopeptidase 2-1 (615 aa).

Residues 137-139 (QCQ) and 261-266 (PYGGME) each bind substrate. Histidine 290 lines the Zn(2+) pocket. Catalysis depends on glutamate 291, which acts as the Proton acceptor. Zn(2+) contacts are provided by histidine 294 and glutamate 313. Tyrosine 380 (proton donor) is an active-site residue.

It belongs to the peptidase M1 family. It depends on Zn(2+) as a cofactor.

It localises to the cytoplasm. The protein localises to the nucleus. It catalyses the reaction an epoxide + H2O = an ethanediol. In terms of biological role, aminopeptidase that preferentially cleaves di- and tripeptides. Also has low epoxide hydrolase activity (in vitro). Can hydrolyze the epoxide leukotriene LTA(4) but it forms preferentially 5,6-dihydroxy-7,9,11,14-eicosatetraenoic acid rather than the cytokine leukotriene B(4) as the product compared to the homologous mammalian enzyme (in vitro). The polypeptide is Leucine aminopeptidase 2-1 (Meyerozyma guilliermondii (strain ATCC 6260 / CBS 566 / DSM 6381 / JCM 1539 / NBRC 10279 / NRRL Y-324) (Yeast)).